A 138-amino-acid chain; its full sequence is Ribulose bisphosphate carboxylase small subunit (138 aa).

This sequence belongs to the RuBisCO small chain family. In terms of assembly, heterohexadecamer of 8 large and 8 small subunits.

The protein resides in the plastid. It is found in the chloroplast. Functionally, ruBisCO catalyzes two reactions: the carboxylation of D-ribulose 1,5-bisphosphate, the primary event in carbon dioxide fixation, as well as the oxidative fragmentation of the pentose substrate in the photorespiration process. Both reactions occur simultaneously and in competition at the same active site. Although the small subunit is not catalytic it is essential for maximal activity. The polypeptide is Ribulose bisphosphate carboxylase small subunit (Cyanidioschyzon merolae (strain NIES-3377 / 10D) (Unicellular red alga)).